The chain runs to 1471 residues: Myosin-4 (1471 aa).

In terms of domain architecture, Myosin N-terminal SH3-like spans 4–57 (EVGTKCWYPHKEQGWIGGEVTKNDFFEGTFHLELKLEDGETVSIETNSFENDDD). The Myosin motor domain occupies 71–777 (ESTDDLTTLS…MLAFLEKLRT (707 aa)). Position 165-172 (165-172 (GESGAGKT)) interacts with ATP. Residues 647–669 (LGELMAIINSTNVHYIRCIKPNS) form an actin-binding region. IQ domains follow at residues 781-801 (NEIC…LQYL), 804-824 (MESI…TRVD), 829-849 (TRAA…EYYR), 876-898 (MLMA…DYRT), and 899-928 (LKRS…EVEE). A coiled-coil region spans residues 938–1063 (GLLEEAIEFK…LAFIENVIAQ (126 aa)). In terms of domain architecture, Dilute spans 1164–1419 (SKVLLTVESI…LNYLANVIKR (256 aa)).

It belongs to the TRAFAC class myosin-kinesin ATPase superfamily. Myosin family. Interacts with SHE2 and SHE3.

The protein localises to the bud. Part of the mRNA localization machinery that restricts accumulation of certain proteins to the bud and in the daughter cell. Recruited to specific mRNAs including the ASH1 mRNA, coding for a repressor of the HO endonuclease, via its interaction with SHE3. The polypeptide is Myosin-4 (MYO4) (Saccharomyces cerevisiae (strain ATCC 204508 / S288c) (Baker's yeast)).